A 144-amino-acid polypeptide reads, in one-letter code: Large ribosomal subunit protein uL15 (144 aa).

Residues 20 to 49 (GRGIGSGLGKTGGRGHKGQKSRSGGFHKVG) form a disordered region. Residues 21-31 (RGIGSGLGKTG) are compositionally biased toward gly residues.

The protein belongs to the universal ribosomal protein uL15 family. Part of the 50S ribosomal subunit.

Its function is as follows. Binds to the 23S rRNA. The protein is Large ribosomal subunit protein uL15 of Neisseria meningitidis serogroup A / serotype 4A (strain DSM 15465 / Z2491).